Here is a 442-residue protein sequence, read N- to C-terminus: Trigger factor (442 aa).

The 86-residue stretch at 163-248 (GDQVVIDFLG…IKEVKAPKAA (86 aa)) folds into the PPIase FKBP-type domain.

This sequence belongs to the FKBP-type PPIase family. Tig subfamily.

It localises to the cytoplasm. It catalyses the reaction [protein]-peptidylproline (omega=180) = [protein]-peptidylproline (omega=0). Involved in protein export. Acts as a chaperone by maintaining the newly synthesized protein in an open conformation. Functions as a peptidyl-prolyl cis-trans isomerase. The polypeptide is Trigger factor (Dinoroseobacter shibae (strain DSM 16493 / NCIMB 14021 / DFL 12)).